Consider the following 195-residue polypeptide: HTH-type transcriptional regulator BetI (195 aa).

The 61-residue stretch at 8 to 68 (SIRRRQLIDA…ATMRDITSQL (61 aa)) folds into the HTH tetR-type domain. The segment at residues 31–50 (TIAQIARRAGVSTGIISHYF) is a DNA-binding region (H-T-H motif).

It participates in amine and polyamine biosynthesis; betaine biosynthesis via choline pathway [regulation]. Repressor involved in the biosynthesis of the osmoprotectant glycine betaine. It represses transcription of the choline transporter BetT and the genes of BetAB involved in the synthesis of glycine betaine. In Escherichia coli O157:H7, this protein is HTH-type transcriptional regulator BetI.